Reading from the N-terminus, the 204-residue chain is Thymidylate kinase (204 aa).

Residue 11–18 (GIDGAGKS) participates in ATP binding.

It belongs to the thymidylate kinase family.

It catalyses the reaction dTMP + ATP = dTDP + ADP. In terms of biological role, phosphorylation of dTMP to form dTDP in both de novo and salvage pathways of dTTP synthesis. The sequence is that of Thymidylate kinase from Janthinobacterium sp. (strain Marseille) (Minibacterium massiliensis).